A 190-amino-acid chain; its full sequence is Holliday junction branch migration complex subunit RuvA (190 aa).

The tract at residues 1 to 64 (MIGSLTGIIE…DNLTQLYGFL (64 aa)) is domain I. Positions 65–142 (DKQEQDYMRM…KMPIEETLII (78 aa)) are domain II. Residue Lys143 is a region of interest, flexible linker. Positions 143-190 (KEDDSLAALISLGYDKLKAFNAIQEIKSDFPNANIQEIIRKALQKLSQ) are domain III.

Belongs to the RuvA family. Homotetramer. Forms an RuvA(8)-RuvB(12)-Holliday junction (HJ) complex. HJ DNA is sandwiched between 2 RuvA tetramers; dsDNA enters through RuvA and exits via RuvB. An RuvB hexamer assembles on each DNA strand where it exits the tetramer. Each RuvB hexamer is contacted by two RuvA subunits (via domain III) on 2 adjacent RuvB subunits; this complex drives branch migration. In the full resolvosome a probable DNA-RuvA(4)-RuvB(12)-RuvC(2) complex forms which resolves the HJ.

The protein localises to the cytoplasm. The RuvA-RuvB-RuvC complex processes Holliday junction (HJ) DNA during genetic recombination and DNA repair, while the RuvA-RuvB complex plays an important role in the rescue of blocked DNA replication forks via replication fork reversal (RFR). RuvA specifically binds to HJ cruciform DNA, conferring on it an open structure. The RuvB hexamer acts as an ATP-dependent pump, pulling dsDNA into and through the RuvAB complex. HJ branch migration allows RuvC to scan DNA until it finds its consensus sequence, where it cleaves and resolves the cruciform DNA. The chain is Holliday junction branch migration complex subunit RuvA from Ehrlichia canis (strain Jake).